Here is a 340-residue protein sequence, read N- to C-terminus: Phosphoribosylformylglycinamidine cyclo-ligase (340 aa).

It belongs to the AIR synthase family.

The protein localises to the cytoplasm. It catalyses the reaction 2-formamido-N(1)-(5-O-phospho-beta-D-ribosyl)acetamidine + ATP = 5-amino-1-(5-phospho-beta-D-ribosyl)imidazole + ADP + phosphate + H(+). It participates in purine metabolism; IMP biosynthesis via de novo pathway; 5-amino-1-(5-phospho-D-ribosyl)imidazole from N(2)-formyl-N(1)-(5-phospho-D-ribosyl)glycinamide: step 2/2. In Macrococcus caseolyticus (strain JCSC5402) (Macrococcoides caseolyticum), this protein is Phosphoribosylformylglycinamidine cyclo-ligase.